Here is a 433-residue protein sequence, read N- to C-terminus: Serine hydroxymethyltransferase (433 aa).

121 to 123 (AHV) is a binding site for (6S)-5,6,7,8-tetrahydrofolate. Lys-227 bears the N6-(pyridoxal phosphate)lysine mark. Residue Glu-243 coordinates (6S)-5,6,7,8-tetrahydrofolate.

This sequence belongs to the SHMT family. In terms of assembly, homodimer. It depends on pyridoxal 5'-phosphate as a cofactor.

It is found in the cytoplasm. It functions in the pathway amino-acid biosynthesis; glycine biosynthesis; glycine from L-serine: step 1/1. Its function is as follows. Catalyzes the reversible interconversion of serine and glycine with a modified folate serving as the one-carbon carrier. Also exhibits a pteridine-independent aldolase activity toward beta-hydroxyamino acids, producing glycine and aldehydes, via a retro-aldol mechanism. In Saccharolobus islandicus (strain Y.G.57.14 / Yellowstone #1) (Sulfolobus islandicus), this protein is Serine hydroxymethyltransferase.